Here is a 322-residue protein sequence, read N- to C-terminus: Mas-related G-protein coupled receptor member X3 (322 aa).

At 1-31 (MDSTIPVLGTELTPINGREETPCYKQTLSFT) the chain is on the extracellular side. The helical transmembrane segment at 32–52 (GLTCIVSLVALTGNAVVLWLL) threads the bilayer. At 53–60 (GCRMRRNA) the chain is on the cytoplasmic side. Residues 61-81 (VSIYILNLVAADFLFLSGHII) form a helical membrane-spanning segment. Residues 82–96 (CSPLRLINIRHPISK) are Extracellular-facing. The chain crosses the membrane as a helical span at residues 97–117 (ILSPVMTFPYFIGLSMLSAIS). The Cytoplasmic segment spans residues 118–140 (TERCLSILWPIWYHCRRPRYLSS). The chain crosses the membrane as a helical span at residues 141–161 (VMCVLLWALSLLRSILEWMFC). Topologically, residues 162 to 177 (DFLFSGANSVWCETSD) are extracellular. The chain crosses the membrane as a helical span at residues 178 to 198 (FITIAWLVFLCVVLCGSSLVL). Residues 199 to 213 (LVRILCGSRKMPLTR) lie on the Cytoplasmic side of the membrane. Residues 214–234 (LYVTILLTVLVFLLCGLPFGI) form a helical membrane-spanning segment. Topologically, residues 235–254 (QWALFSRIHLDWKVLFCHVH) are extracellular. A helical membrane pass occupies residues 255-275 (LVSIFLSALNSSANPIIYFFV). Residues 276–322 (GSFRQRQNRQNLKLVLQRALQDTPEVDEGGGWLPQETLELSGSRLEQ) are Cytoplasmic-facing.

The protein belongs to the G-protein coupled receptor 1 family. Mas subfamily. Uniquely localized in a subset of small dorsal root and trigeminal sensory neurons.

Its subcellular location is the cell membrane. Orphan receptor. Probably involved in the function of nociceptive neurons. May regulate nociceptor function and/or development, including the sensation or modulation of pain. Potently activated by enkephalins. The polypeptide is Mas-related G-protein coupled receptor member X3 (MRGPRX3) (Homo sapiens (Human)).